We begin with the raw amino-acid sequence, 396 residues long: Acetate kinase (396 aa).

Residue Asn8 coordinates Mg(2+). Lys15 contacts ATP. Arg89 lines the substrate pocket. Asp146 acts as the Proton donor/acceptor in catalysis. ATP-binding positions include 206 to 210 (HIGNG), 283 to 285 (DMR), and 331 to 335 (GVGEN). Mg(2+) is bound at residue Glu383.

Belongs to the acetokinase family. As to quaternary structure, homodimer. Mg(2+) serves as cofactor. The cofactor is Mn(2+).

It localises to the cytoplasm. It carries out the reaction acetate + ATP = acetyl phosphate + ADP. It participates in metabolic intermediate biosynthesis; acetyl-CoA biosynthesis; acetyl-CoA from acetate: step 1/2. Its function is as follows. Catalyzes the formation of acetyl phosphate from acetate and ATP. Can also catalyze the reverse reaction. The chain is Acetate kinase from Streptococcus pneumoniae (strain ATCC 700669 / Spain 23F-1).